Here is a 336-residue protein sequence, read N- to C-terminus: Nitrilase (336 aa).

The CN hydrolase domain occupies 5 to 278; sequence LKVACVQAAP…EGLLYATLDP (274 aa). Catalysis depends on E45, which acts as the Proton acceptor. The active-site Proton donor is the K127. Residue C161 is the Nucleophile of the active site.

This sequence belongs to the carbon-nitrogen hydrolase superfamily. Nitrilase family.

It carries out the reaction a nitrile + 2 H2O = a carboxylate + NH4(+). The catalysed reaction is (indol-3-yl)acetonitrile + 2 H2O = (indol-3-yl)acetate + NH4(+). The enzyme catalyses phenylpropanonitrile + 2 H2O = 3-phenylpropanoate + NH4(+). Its function is as follows. Arylacetonitrilase which is capable of hydrolyzing indole-3-acetonitrile (IAN) to the plant hormone indole-3-acetate (IAA), and allows the plant pathogenic bacterium to use IAN as a sole nitrogen source. Is also able to hydrolyze phenylpropionitrile (PPN), allowing the use of this compound as a sole nitrogen source. This enzyme may represent an additional mechanism for IAA biosynthesis or may be used to degrade and assimilate aldoximes and nitriles produced during host plant secondary metabolism. In Pseudomonas syringae pv. syringae (strain B728a), this protein is Nitrilase.